Consider the following 62-residue polypeptide: Large ribosomal subunit protein uL29 (62 aa).

The protein belongs to the universal ribosomal protein uL29 family.

This Vesicomyosocius okutanii subsp. Calyptogena okutanii (strain HA) protein is Large ribosomal subunit protein uL29.